The following is a 160-amino-acid chain: Sperm acrosome-associated protein 5 (160 aa).

Positions 1–21 are cleaved as a signal peptide; sequence MKVCSIVVVILAVLLIAKLDA. Residues 22–150 enclose the C-type lysozyme domain; that stretch reads KIYERCELAK…SEWLKGCSVR (129 aa). 4 cysteine pairs are disulfide-bonded: cysteine 27–cysteine 147, cysteine 51–cysteine 135, cysteine 85–cysteine 100, and cysteine 96–cysteine 114. The active site involves glutamate 56.

Belongs to the glycosyl hydrolase 22 family.

Its subcellular location is the secreted. The enzyme catalyses Hydrolysis of (1-&gt;4)-beta-linkages between N-acetylmuramic acid and N-acetyl-D-glucosamine residues in a peptidoglycan and between N-acetyl-D-glucosamine residues in chitodextrins.. This is Sperm acrosome-associated protein 5 (Spaca5) from Mus musculus (Mouse).